A 1371-amino-acid polypeptide reads, in one-letter code: Perilipin-4 (1371 aa).

A compositionally biased stretch (basic and acidic residues) spans 1 to 13 (MSAPDEGRRDPPK). The tract at residues 1–22 (MSAPDEGRRDPPKPKGKTLGSF) is disordered. 2 positions are modified to phosphoserine: Ser25 and Ser31. Positions 37–86 (ANAHSSARARPAADPTGAPAAEAAQPQAQVAAHPEQTAPWTEKELQPSEK) are disordered. Positions 44–72 (RARPAADPTGAPAAEAAQPQAQVAAHPEQ) are enriched in low complexity. 27 repeat units span residues 109–141 (GVASVVDVAKGVVQGGLDTTRSALTGTKEVVSS), 142–174 (GVTGAMDMAKGAVQGGLDTSKAVLTGTKDTVST), 175–207 (GLTGAVNVAKGTVQAGVDTTKTVLTGTKDTVTT), 208–240 (GVMGAVNLAKGTVQTGVETSKAVLTGTKDAVST), 241–273 (GLTGAVNVARGSIQTGVDTSKTVLTGTKDTVCS), 274–306 (GVTGAMNVAKGTIQTGVDTSKTVLTGTKDTVCS), 307–339 (GVTGAMNVAKGTIQTGVDTSKTVLTGTKDTVCS), 340–372 (GVTGAMNVAKGTIQTGVDTTKTVLTGTKNTVCS), 373–405 (GVTGAVNLAKEAIQGGLDTTKSMVMGTKDTMST), 406–438 (GLTGAANVAKGAMQTGLNTTQNIATGTKDTVCS), 439–471 (GVTGAMNLARGTIQTGVDTTKIVLTGTKDTVCS), 472–504 (GVTGAANVAKGAVQGGLDTTKSVLTGTKDAVST), 505–537 (GLTGAVNVAKGTVQTGVDTTKTVLTGTKDTVCS), 538–570 (GVTSAVNVAKGAVQGGLDTTKSVVIGTKDTMST), 571–603 (GLTGAANVAKGAVQTGVDTAKTVLTGTKDTVTT), 604–636 (GLVGAVNVAKGTVQTGMDTTKTVLTGTKDTIYS), 637–669 (GVTSAVNVAKGAVQTGLKTTQNIATGTKNTFGS), 670–702 (GVTSAVNVAKGAAQTGVDTAKTVLTGTKDTVTT), 703–735 (GLMGAVNVAKGTVQTSVDTTKTVLTGTKDTVCS), 736–768 (GVTGAANVAKGAIQGGLDTTKSVLTGTKDAVST), 769–801 (GLTGAVKLAKGTVQTGMDTTKTVLTGTKDAVCS), 802–834 (GVTGAANVAKGAVQMGVDTAKTVLTGTKDTVCS), 835–867 (GVTGAANVAKGAVQTGLKTTQNIATGTKNTLGS), 868–900 (GVTGAAKVAKGAVQGGLDTTKSVLTGTKDAVST), 901–933 (GLTGAVNLAKGTVQTGVDTSKTVLTGTKDTVCS), 934–966 (GVTGAVNVAKGTVQTGVDTAKTVLSGAKDAVTT), and 967–999 (GVTGAVNVAKGTVQTGVDASKAVLMGTKDTVFS). Positions 109–999 (GVASVVDVAK…LMGTKDTVFS (891 aa)) are 27 X 33 AA approximate tandem repeat. Over residues 1060-1083 (PATSWGGLTSSRTTDNGGEQTALS) the composition is skewed to polar residues. Disordered stretches follow at residues 1060-1093 (PATSWGGLTSSRTTDNGGEQTALSPQEAPFSGIS) and 1240-1260 (QAPEGQPRLDQGSGASAEDAA).

Belongs to the perilipin family.

The protein resides in the cell membrane. It is found in the cytoplasm. It localises to the lipid droplet. Functionally, may play a role in triacylglycerol packaging into adipocytes. May function as a coat protein involved in the biogenesis of lipid droplets. This Homo sapiens (Human) protein is Perilipin-4.